Here is a 90-residue protein sequence, read N- to C-terminus: DNA-binding protein HU-1 (90 aa).

At Thr4 the chain carries Phosphothreonine.

It belongs to the bacterial histone-like protein family. Homodimer.

In terms of biological role, histone-like DNA-binding protein which is capable of wrapping DNA to stabilize it, and thus to prevent its denaturation under extreme environmental conditions. In Halalkalibacterium halodurans (strain ATCC BAA-125 / DSM 18197 / FERM 7344 / JCM 9153 / C-125) (Bacillus halodurans), this protein is DNA-binding protein HU-1 (hup2).